The sequence spans 469 residues: Threonine synthase (469 aa).

N6-(pyridoxal phosphate)lysine is present on K112.

The protein belongs to the threonine synthase family. It depends on pyridoxal 5'-phosphate as a cofactor.

It carries out the reaction O-phospho-L-homoserine + H2O = L-threonine + phosphate. It functions in the pathway amino-acid biosynthesis; L-threonine biosynthesis; L-threonine from L-aspartate: step 5/5. Functionally, catalyzes the gamma-elimination of phosphate from L-phosphohomoserine and the beta-addition of water to produce L-threonine. The protein is Threonine synthase (thrC) of Pseudomonas aeruginosa (strain ATCC 15692 / DSM 22644 / CIP 104116 / JCM 14847 / LMG 12228 / 1C / PRS 101 / PAO1).